A 547-amino-acid chain; its full sequence is Delta-guaiene synthase 3 (547 aa).

Residues D299, D303, and D444 each coordinate Mg(2+). The DDXXD motif motif lies at 299–303 (DDTYD).

Belongs to the terpene synthase family. The cofactor is Mg(2+).

The catalysed reaction is (2E,6E)-farnesyl diphosphate = delta-guaiene + diphosphate. The enzyme catalyses (2E,6E)-farnesyl diphosphate = alpha-guaiene + diphosphate. It participates in secondary metabolite biosynthesis; terpenoid biosynthesis. Sesquiterpene synthase involved in the biosynthesis of delta-guaiene (78.2%) and alpha-guaiene (20.9%), two structures composed of five- and seven-membered rings. Also produces 0.9% of alpha-humulene. The protein is Delta-guaiene synthase 3 (C4) of Aquilaria crassna (Eagle wood).